Reading from the N-terminus, the 218-residue chain is Outer-membrane lipoprotein LolB (218 aa).

The signal sequence occupies residues 1 to 24; that stretch reads MNNLSYLTKIPLIWVLLSVTLLSA. The N-palmitoyl cysteine moiety is linked to residue C25. C25 carries S-diacylglycerol cysteine lipidation.

This sequence belongs to the LolB family. Monomer.

The protein resides in the cell outer membrane. Functionally, plays a critical role in the incorporation of lipoproteins in the outer membrane after they are released by the LolA protein. The protein is Outer-membrane lipoprotein LolB of Shewanella sediminis (strain HAW-EB3).